A 249-amino-acid polypeptide reads, in one-letter code: Enolase-phosphatase E1 (249 aa).

Asp14 and Glu16 together coordinate Mg(2+). Substrate-binding positions include Ser141 to Ser142 and Lys175. Asp200 serves as a coordination point for Mg(2+).

This sequence belongs to the HAD-like hydrolase superfamily. MasA/MtnC family. As to quaternary structure, monomer. Mg(2+) serves as cofactor.

The protein resides in the cytoplasm. The protein localises to the nucleus. It carries out the reaction 5-methylsulfanyl-2,3-dioxopentyl phosphate + H2O = 1,2-dihydroxy-5-(methylsulfanyl)pent-1-en-3-one + phosphate. The protein operates within amino-acid biosynthesis; L-methionine biosynthesis via salvage pathway; L-methionine from S-methyl-5-thio-alpha-D-ribose 1-phosphate: step 3/6. It participates in amino-acid biosynthesis; L-methionine biosynthesis via salvage pathway; L-methionine from S-methyl-5-thio-alpha-D-ribose 1-phosphate: step 4/6. Functionally, bifunctional enzyme that catalyzes the enolization of 2,3-diketo-5-methylthiopentyl-1-phosphate (DK-MTP-1-P) into the intermediate 2-hydroxy-3-keto-5-methylthiopentenyl-1-phosphate (HK-MTPenyl-1-P), which is then dephosphorylated to form the acireductone 1,2-dihydroxy-3-keto-5-methylthiopentene (DHK-MTPene). The chain is Enolase-phosphatase E1 from Drosophila virilis (Fruit fly).